The following is a 180-amino-acid chain: Cytokinin-beta-glucosidase 2 (180 aa).

Hydrolyzes cytokinin glucosides thus liberating free cytokinins. The chain is Cytokinin-beta-glucosidase 2 (ROLC2) from Linaria vulgaris (Toadflax).